The sequence spans 306 residues: SPbeta prophage-derived uncharacterized protein YonG (306 aa).

This is SPbeta prophage-derived uncharacterized protein YonG (yonG) from Bacillus subtilis (strain 168).